The sequence spans 313 residues: MATRLSDLFGNSRIIAGLLVNLLSSICIVFINKWIYVHYGFPNMTLTLIHFVMTWLGLFICQKMDIFAPKSLRPSKILLLALSFCGFVVFTNLSLQSNTIGTYQLAKVMTTPVIIAIQTMYYRKTFSTKIKLTLVPITLGVILNSYYDVRFNLMGMIFATLGVLVTSLYQVWVGAKQHELQVNSMQLLYYQAPMSSAFLLVLVPFFEPLTGDGGIFGPWSFLALFMVLLSGVIAFLVNLSIYWIIGNTSPVTYNMFGHFKFCITLLGGYVLFQDPLSLNQGLGILCTLTGILAYTHFKLAEQEEGKSRLTQRP.

10 consecutive transmembrane segments (helical) span residues 14 to 34, 40 to 60, 77 to 97, 100 to 122, 130 to 146, 153 to 173, 187 to 207, 215 to 235, 252 to 272, and 275 to 295; these read IIAG…INKW, GFPN…GLFI, ILLL…SLQS, IGTY…TMYY, IKLT…LNSY, LMGM…QVWV, LLYY…PFFE, IFGP…VIAF, TYNM…YVLF, and PLSL…LAYT.

The protein belongs to the TPT transporter family. SLC35E subfamily.

The protein resides in the membrane. Its function is as follows. Putative transporter. The polypeptide is Solute carrier family 35 member E3 (slc35e3) (Danio rerio (Zebrafish)).